Reading from the N-terminus, the 89-residue chain is Small ribosomal subunit protein uS15 (89 aa).

The protein belongs to the universal ribosomal protein uS15 family. Part of the 30S ribosomal subunit. Forms a bridge to the 50S subunit in the 70S ribosome, contacting the 23S rRNA.

In terms of biological role, one of the primary rRNA binding proteins, it binds directly to 16S rRNA where it helps nucleate assembly of the platform of the 30S subunit by binding and bridging several RNA helices of the 16S rRNA. Its function is as follows. Forms an intersubunit bridge (bridge B4) with the 23S rRNA of the 50S subunit in the ribosome. This Gloeothece citriformis (strain PCC 7424) (Cyanothece sp. (strain PCC 7424)) protein is Small ribosomal subunit protein uS15.